Here is a 195-residue protein sequence, read N- to C-terminus: Calcineurin B homologous protein 1 (195 aa).

Glycine 2 is lipidated: N-myristoyl glycine. A Necessary for association with microtubule and interaction with GAPDH motif is present at residues 2–6 (GSRAS). 4 EF-hand domains span residues 26–61 (SQIT…AINP), 71–106 (FSEG…NGPE), 110–145 (SRSN…MVGV), and 151–186 (QLGS…VDVE). Ca(2+)-binding residues include aspartate 123, aspartate 125, aspartate 127, lysine 129, and glutamate 134. Residues 138 to 147 (VLRMMVGVNI) carry the Nuclear export signal 1 motif. 4 residues coordinate Ca(2+): aspartate 164, aspartate 166, aspartate 168, and glutamate 175. The Nuclear export signal 2 motif lies at 176–185 (FVKVLEKVDV).

The protein belongs to the calcineurin regulatory subunit family. CHP subfamily. As to quaternary structure, monomer. Interacts with STK17B; the interaction occurs in a calcium-independent manner and induces the translocation of CHP1 from the Golgi to the nucleus. Interacts with GAPDH; the interaction is direct, occurs in a N-myristoylation-dependent manner and facilitates the ability of CHP1 to bind microtubules. Interacts with KIF1B (via the C-terminal end of the kinesin-motor domain); the interaction occurs in a calcium-dependent manner. Associates (via C-terminal domain) with microtubules; the association occurs with polymerized microtubules during the cell cycle in a myristoylation- and calcium-independent manner and is enhanced by GAPDH. Interacts with PPP3CA. Interacts with SLC9A1/NHE1 (via the cytoplasmic C-terminal domain); the interaction occurs at the plasma membrane in a calcium-dependent manner and at a domain that is critical for growth factor stimulation of the exchanger. Interacts with SLC9A3; increases SLC9A3 trafficking and activity at the plasma membrane. In terms of processing, phosphorylated; decreased phosphorylation is associated with an increase in SLC9A1/NHE1 Na(+)/H(+) exchange activity. Phosphorylation occurs in serum-dependent manner. The phosphorylation state may regulate the binding to SLC9A1/NHE1. Both N-myristoylation and calcium-mediated conformational changes are essential for its function in exocytic traffic. N-myristoylation is required for its association with microtubules and interaction with GAPDH, but not for the constitutive association to membranes.

It is found in the nucleus. It localises to the cytoplasm. Its subcellular location is the cytoskeleton. The protein localises to the endomembrane system. The protein resides in the endoplasmic reticulum-Golgi intermediate compartment. It is found in the endoplasmic reticulum. It localises to the cell membrane. Its subcellular location is the membrane. In terms of biological role, calcium-binding protein involved in different processes such as regulation of vesicular trafficking, plasma membrane Na(+)/H(+) exchanger and gene transcription. Involved in the constitutive exocytic membrane traffic. Mediates the association between microtubules and membrane-bound organelles of the endoplasmic reticulum and Golgi apparatus and is also required for the targeting and fusion of transcytotic vesicles (TCV) with the plasma membrane. Functions as an integral cofactor in cell pH regulation by controlling plasma membrane-type Na(+)/H(+) exchange activity. Affects the pH sensitivity of SLC9A1/NHE1 by increasing its sensitivity at acidic pH. Required for the stabilization and localization of SLC9A1/NHE1 at the plasma membranes. Inhibits serum- and GTPase-stimulated Na(+)/H(+) exchange. Plays a role as an inhibitor of ribosomal RNA transcription by repressing the nucleolar UBF1 transcriptional activity. May sequester UBF1 in the nucleoplasm and limit its translocation to the nucleolus. Associates to the ribosomal gene promoter. Acts as a negative regulator of the calcineurin/NFAT signaling pathway. Inhibits NFAT nuclear translocation and transcriptional activity by suppressing the calcium-dependent calcineurin phosphatase activity. Also negatively regulates the kinase activity of the apoptosis-induced kinase STK17B. Inhibits both STK17B auto- and substrate-phosphorylations in a calcium-dependent manner. The protein is Calcineurin B homologous protein 1 (Chp1) of Mus musculus (Mouse).